The sequence spans 331 residues: Phosphoenolpyruvate transferase (331 aa).

Asp63 contacts 7,8-didemethyl-8-hydroxy-5-deazariboflavin.

This sequence belongs to the CofD family. In terms of assembly, homodimer. Mg(2+) is required as a cofactor.

The catalysed reaction is enolpyruvoyl-2-diphospho-5'-guanosine + 7,8-didemethyl-8-hydroxy-5-deazariboflavin = dehydro coenzyme F420-0 + GMP + H(+). Its pathway is cofactor biosynthesis; coenzyme F420 biosynthesis. Functionally, catalyzes the transfer of the phosphoenolpyruvate moiety from enoylpyruvoyl-2-diphospho-5'-guanosine (EPPG) to 7,8-didemethyl-8-hydroxy-5-deazariboflavin (FO) with the formation of dehydro coenzyme F420-0 and GMP. This chain is Phosphoenolpyruvate transferase, found in Mycobacterium bovis (strain ATCC BAA-935 / AF2122/97).